Here is a 192-residue protein sequence, read N- to C-terminus: Protein GrpE (192 aa).

The tract at residues 1 to 34 (MSSKEQKTPNEQVSEEMENAAEQQVEATQETGEG) is disordered. The span at 21–31 (AEQQVEATQET) shows a compositional bias: polar residues.

The protein belongs to the GrpE family. In terms of assembly, homodimer.

It is found in the cytoplasm. Functionally, participates actively in the response to hyperosmotic and heat shock by preventing the aggregation of stress-denatured proteins, in association with DnaK and GrpE. It is the nucleotide exchange factor for DnaK and may function as a thermosensor. Unfolded proteins bind initially to DnaJ; upon interaction with the DnaJ-bound protein, DnaK hydrolyzes its bound ATP, resulting in the formation of a stable complex. GrpE releases ADP from DnaK; ATP binding to DnaK triggers the release of the substrate protein, thus completing the reaction cycle. Several rounds of ATP-dependent interactions between DnaJ, DnaK and GrpE are required for fully efficient folding. The chain is Protein GrpE from Yersinia enterocolitica serotype O:8 / biotype 1B (strain NCTC 13174 / 8081).